The following is a 312-amino-acid chain: Taste receptor type 2 member 7 (312 aa).

At 1–9 the chain is on the extracellular side; sequence MTYETDTTL. The helical transmembrane segment at 10 to 30 threads the bilayer; it reads MLVAVGEALVGILGNAFIALV. The Cytoplasmic segment spans residues 31-49; that stretch reads NFMGWMKNRKIASIDLILS. The helical transmembrane segment at 50 to 70 threads the bilayer; it reads SVAMSRICLQCIILLDCIILV. The Extracellular segment spans residues 71 to 101; the sequence is QYPDTYNRGKEMRTVDFFWTLTNHLSVWFAT. Residues 102-122 form a helical membrane-spanning segment; sequence CLSIFYLFKIANFFHPLFLWI. The Cytoplasmic portion of the chain corresponds to 123–128; the sequence is KWRIDK. A helical membrane pass occupies residues 129–149; sequence LILRTLLACVIISLCFSLPVT. At 150–187 the chain is on the extracellular side; that stretch reads ENLSDDFRRCVKTKERINSTLRCKVNKAGHASVKVNLN. N-linked (GlcNAc...) asparagine glycans are attached at residues Asn-151 and Asn-167. Residues 188-208 traverse the membrane as a helical segment; it reads LVMLFPFSVSLVSFLLLILSL. Residues 209-235 are Cytoplasmic-facing; that stretch reads WRHTRQIQLSVTGYKDPSTTAHVKAMK. A helical transmembrane segment spans residues 236 to 256; sequence AVISFLALFVVYCLAFLIATS. At 257–266 the chain is on the extracellular side; the sequence is SYFMPESELA. The helical transmembrane segment at 267–287 threads the bilayer; it reads VIWGELIALIYPSSHSFILIL. Over 288-312 the chain is Cytoplasmic; that stretch reads GSSKLKQASVRVLCRVKTMLKGKKY.

Belongs to the G-protein coupled receptor T2R family. As to expression, expressed in subsets of taste receptor cells of the tongue and palate epithelium and exclusively in gustducin-positive cells. Expressed in 15% taste bud cells in circumvallate and foliate papillae but only in 2% in fungiform papillae. Expressed in gastric and duodenal tissues.

It is found in the membrane. Gustducin-coupled receptor implicated in the perception of bitter compounds in the oral cavity and the gastrointestinal tract. Signals through PLCB2 and the calcium-regulated cation channel TRPM5. In Mus musculus (Mouse), this protein is Taste receptor type 2 member 7 (Tas2r7).